The primary structure comprises 1441 residues: MSIAIPLGVTTPDTSYSDMAAGSDPESVEASPAVNEKSVYSTHNYGTTQRHGCRGLPYATIIPRSDLNGLPSPVEERCGDSPNSEGETVPTWCPCGLSQDGFLLNCDKCRGMSRGKVIRLHRRKQDNISGGDSSATESWDEELSPSTVLYTATQHTPTSITLTVRRTKPKKRKKSPEKGRAAPKTKKIKNSPSEAQNLDENTTEGWENRIRLWTDQYEEAFTNQYSADVQNALEQHLHSNKEFVGKPAILDTINKTELACNNTVIGSQMQLQLGRVTRVQKHRKILRAARDLALDTLIIEYRGKVMLRQQFEVNGHFFKKPYPFVLFYSKFNGVEMCVDARTFGNDARFIRRSCTPNAEVRHMIADGMIHLCIYAVSAITKDAEVTIAFDYEYSNCNYKVDCACHKGNRNCPIQKRNPNAAELPLPPPPSFPTIGAETRRRKARRKELELEQQNEVPEENPDPQPQEVPEKVTVSNEHEEVDNPEEKPEEEEKEEATDDQENSAHSRRTREDRKVEAIMHAFESLEKRKKRRDQPVEQSSSDIEITTSSSEIVVGEETKTAAPESEVSSPVSNVAIPSTPQSTGVNTRRSSHAGDVAAEKPIPKPPPAKPSRPRPKSRISRYRTSSAQRLKRQKQAIAQQAELSQAALEEGGSNNSVTPPEAGNTDSSGENRQLTGSDPTVISVTGSHVNRAASKYPKTKKYLVTEWLNDKAEKQECPVECPLRITTDPTVLATTLNMLPGLIHSPLICTTPKHYIRFGSPFMPERRRRPLLPDGTFSSCKKRWIKQALEEGMTQTSSVPQETRTQHLYQSNETSNSSSICKDNADLLSPLKKWKSRYLMEQNITKLLQPLSPVTPPPPSSGSKSPQLTTPGQTHPGEEECRNGYSLMFSPITSLTTASRSNTPLQFELCHRKDLDLTKVGFPDSSTHSCADRPSLLNCNHPDLASHPSVVPTSEAGFPSRSGDGPQTLLRNSDQAFRTEFNLMYAYSPLNAMPRADGLYRGSPLVGDRKPLHLDGGYCSPAEGFSSRYEHGFMKDLSRGSMSPGGERTCEGVPSAPQNPPQRKKVSLLEYRKRKQEAKENSGGGNDSSQSKSKSSGAGQGSSNSVSDTGAHGVQGSSAGTPSSPHKKFSPSHSSASHLEAVSPSDSRGTSSSHCRPQENISSRWMVPTSVERLREGGSIPKVLRSSVRVAQKGEPSPTWESNITEKESDPADGEGPEPLSSALSKGATVYSPSRYSYQLLQCDSPRTESQSLLQQSSSPFRGHPTQSPGYSYRTTALRPGNPPSHGSSESSLSSTSYPSPAHPVSTDSLAPFTGTPGYYSSQPHSGNSTGSNLPRRSCSSSAASPTPQGPSDSPTSDSVSQSSTGTLSSTSFPQNSRSSLPSDLRTISLPNAGQSAAYQASRVSAVSNSQHYPHRGSGGVHQYRLQPLQGSGVKTQTGLS.

A disordered region spans residues 1 to 28; that stretch reads MSIAIPLGVTTPDTSYSDMAAGSDPESV. L70 carries the phosphothreonine modification. Residues S72 and V74 each carry the phosphoserine modification. The tract at residues 156–202 is disordered; it reads TPTSITLTVRRTKPKKRKKSPEKGRAAPKTKKIKNSPSEAQNLDENT. Positions 165–189 are enriched in basic residues; sequence RRTKPKKRKKSPEKGRAAPKTKKIK. The segment covering 190–202 has biased composition (polar residues); that stretch reads NSPSEAQNLDENT. The region spanning 269 to 390 is the SET domain; that stretch reads MQLQLGRVTR…KDAEVTIAFD (122 aa). 2 disordered regions span residues 417–683 and 793–816; these read NPNA…TVIS and MTQT…ETSN. Acidic residues-rich tracts occupy residues 450-461 and 479-501; these read LEQQNEVPEENP and EEVD…DDQE. Low complexity-rich tracts occupy residues 539-552 and 561-572; these read SSSD…SSEI and AAPESEVSSPVS. A compositionally biased stretch (polar residues) spans 575 to 588; the sequence is AIPSTPQSTGVNTR. The segment covering 611–621 has biased composition (basic residues); it reads SRPRPKSRISR. A compositionally biased stretch (low complexity) spans 635–650; sequence QAIAQQAELSQAALEE. Positions 652–683 are enriched in polar residues; the sequence is GSNNSVTPPEAGNTDSSGENRQLTGSDPTVIS. Phosphoserine occurs at positions 829 and 852. 3 disordered regions span residues 849-883, 1036-1228, and 1243-1441; these read QPLS…ECRN, DLSR…SKGA, and CDSP…TGLS. Residue T855 is modified to Phosphothreonine. Residues 1062-1076 are compositionally biased toward basic residues; it reads QRKKVSLLEYRKRKQ. A compositionally biased stretch (low complexity) spans 1087–1107; the sequence is DSSQSKSKSSGAGQGSSNSVS. The segment covering 1144 to 1163 has biased composition (polar residues); it reads PSDSRGTSSSHCRPQENISS. S1197 is subject to Phosphoserine. Positions 1250 to 1259 are enriched in low complexity; it reads SQSLLQQSSS. Positions 1265-1275 are enriched in polar residues; the sequence is PTQSPGYSYRT. A compositionally biased stretch (low complexity) spans 1284-1300; it reads PSHGSSESSLSSTSYPS. A compositionally biased stretch (polar residues) spans 1319 to 1333; the sequence is YYSSQPHSGNSTGSN. Residues 1335–1372 show a composition bias toward low complexity; it reads PRRSCSSSAASPTPQGPSDSPTSDSVSQSSTGTLSSTS. 3 stretches are compositionally biased toward polar residues: residues 1373–1382, 1389–1412, and 1429–1441; these read FPQNSRSSLP, SLPN…NSQH, and LQGS…TGLS.

Interacts with components of the PAF1 complex (PAF1C) such as LEO1, CTR9 and CDC73. Interacts with NCOR1. Interacts with HDAC3. Ubiquitously expressed.

The protein localises to the nucleus. It is found in the chromosome. It catalyses the reaction L-lysyl(9)-[histone H3] + S-adenosyl-L-methionine = N(6)-methyl-L-lysyl(9)-[histone H3] + S-adenosyl-L-homocysteine + H(+). It carries out the reaction L-lysyl(36)-[histone H3] + 3 S-adenosyl-L-methionine = N(6),N(6),N(6)-trimethyl-L-lysyl(36)-[histone H3] + 3 S-adenosyl-L-homocysteine + 3 H(+). Its function is as follows. Chromatin regulator required for brain development: acts as a regulator of RNA elongation rate, thereby regulating neural stem cell (NSC) proliferation and synaptic transmission. May act by mediating trimethylation of 'Lys-36' of histone H3 (H3K36me3), which is essential to allow on-time RNA elongation dynamics. Also monomethylates 'Lys-9' of histone H3 (H3K9me1) in vitro. The relevance of histone methyltransferase activity is however subject to discussion. In Mus musculus (Mouse), this protein is Histone-lysine N-methyltransferase SETD5.